Here is a 423-residue protein sequence, read N- to C-terminus: Anthranilate 1,2-dioxygenase large subunit (423 aa).

In terms of domain architecture, Rieske spans 53–168 (WNFVALEAEI…VDSYRGLVFA (116 aa)). [2Fe-2S] cluster-binding residues include cysteine 95, histidine 97, cysteine 115, and histidine 118. 3 residues coordinate Fe cation: histidine 223, histidine 228, and aspartate 370.

The protein belongs to the bacterial ring-hydroxylating dioxygenase alpha subunit family. As to quaternary structure, part of a multicomponent enzyme system composed of a reductase (AndAa), a ferredoxin (AndAb) and a two-subunit oxygenase component (AndAc and AndAd). Fe cation serves as cofactor. [2Fe-2S] cluster is required as a cofactor.

It catalyses the reaction anthranilate + NADH + O2 + 3 H(+) = catechol + NH4(+) + CO2 + NAD(+). The enzyme catalyses anthranilate + NADPH + O2 + 3 H(+) = catechol + NH4(+) + CO2 + NADP(+). The protein operates within aromatic compound metabolism; anthranilate degradation via hydroxylation; catechol from anthranilate: step 1/1. Functionally, oxygenase component of anthranilate dioxygenase multicomponent enzyme system which catalyzes the incorporation of both atoms of molecular oxygen into anthranilate to form catechol. Can also act on benzoate and salicylate but not on 2-chlorobenzoate or o-toluate. The sequence is that of Anthranilate 1,2-dioxygenase large subunit from Burkholderia cepacia (Pseudomonas cepacia).